Consider the following 905-residue polypeptide: V-type proton ATPase 116 kDa subunit a 1 (905 aa).

Residues 1–424 (MGDYVTPGEE…DAYGIATYRE (424 aa)) lie on the Cytoplasmic side of the membrane. A helical transmembrane segment spans residues 425 to 443 (INPAPYTMISFPFLFAVMF). Residues 444 to 445 (GD) are Lumenal-facing. A helical membrane pass occupies residues 446-462 (MGHGAIMLLAALFFILK). Residues 463–477 (EKQLEAARIKDEIFQ) are Cytoplasmic-facing. A helical transmembrane segment spans residues 478 to 507 (TFFGGRYVIFLMGAFSIYTGFMYNDVFSKS). Residues 508–572 (INTFGSSWQN…EGNKLSFLNS (65 aa)) lie on the Lumenal side of the membrane. A helical transmembrane segment spans residues 573–592 (MKMKMSVLFGIAQMTFGVLL). The Cytoplasmic portion of the chain corresponds to 593 to 610 (SYQNFIYFKSDLDIKYMF). Residues 611-631 (IPQMIFLSSIFIYLCIQILSK) traverse the membrane as a helical segment. At 632 to 699 (WLFFGAVGGT…YPGQATIEII (68 aa)) the chain is on the lumenal side. The helical transmembrane segment at 700 to 719 (LVVLALVQVPIMLFAKPYFL) threads the bilayer. The Cytoplasmic segment spans residues 720-788 (YRRDKQQSRY…DVMVYQAIHT (69 aa)). Residues 789 to 813 (IEFVLGCVSHTASYLRLWALSLAHA) form a helical membrane-spanning segment. Topologically, residues 814–834 (QLSDVLWTMVFRNAFVLDGYT) are lumenal. A helical transmembrane segment spans residues 835–873 (GAIATYILFFIFGSLSVFILVLMEGLSAFLHALRLHWVE). The Cytoplasmic portion of the chain corresponds to 874-905 (FQSKFYGGLGYEFAPFSFEKILAEEREAEENL).

The protein belongs to the V-ATPase 116 kDa subunit family. In terms of assembly, V-ATPase is a heteromultimeric enzyme made up of two complexes: the ATP-hydrolytic V1 complex and the proton translocation V0 complex. The V1 complex consists of three catalytic AB heterodimers that form a heterohexamer, three peripheral stalks each consisting of EG heterodimers, one central rotor including subunits D and F, and the regulatory subunits C and H. The proton translocation complex V0 consists of the proton transport subunit a, a ring of proteolipid subunits c9c'', rotary subunit d, subunits e and f, and the accessory subunits vah-19/Ac45 and vah-20/PRR. Interacts with V-type proton ATPase subunit C vha-11. Ubiquitous expression in embryos. Expressed in gonads, intestine, neurons in the head and motoneurons in the ventral cord of larvae and adults. Expressed in the vulvae and spermathecal uterine valves. Weakly expressed in the pharynx. As to expression, specifically expressed in the nervous system.

The protein resides in the membrane. Its function is as follows. Subunit of the V0 complex of vacuolar(H+)-ATPase (V-ATPase), a multisubunit enzyme composed of a peripheral complex (V1) that hydrolyzes ATP and a membrane integral complex (V0) that translocates protons. V-ATPase is responsible for acidifying and maintaining the pH of intracellular compartments and in some cell types, is targeted to the plasma membrane, where it is responsible for acidifying the extracellular environment. Required for assembly and activity of the vacuolar ATPase. Regulates the size of gut granules during embryonic development. In neurons, required for necrotic cell death by promoting intracellular acidification. Required for cell death induced by hypoxia. Required for acidification of synaptic vesicles and the release of neurotransmitters from adult neurons. The polypeptide is V-type proton ATPase 116 kDa subunit a 1 (Caenorhabditis elegans).